The following is a 357-amino-acid chain: MQIIHEDPKEGKVKVKAETLDDLWHLYHIIDEGDVVYAKTLRKQSQRSDSLRAEKVEVIPVFLGVRAEKINFHKFANQVRVTGPIVYASREDVPLGKYHTIAIEEGTVVTIQKPRWKEHHIERLREAVSASKRARVMIVVIDDGEADMALVREYGVEILTSIRHNLGGKRYNTDREAEEKRFFHDVAKTMEEIMNREKVEKAIVAGPGFVKEDFYKFLRENYPELVKKVVIEDTSVTGRTGIYEVIKRGTVDRVYHENRVAKEVQLIEKVLENIAKNNGLVAYGLREVEEAANYGAVETLLVLDELLKGEMREKIEELMDAVRYSRGEVVIVSSEHEGGEKLKALGGLAALLRFRVK.

This sequence belongs to the eukaryotic release factor 1 family. Pelota subfamily. As to quaternary structure, monomer. The cofactor is a divalent metal cation.

Its subcellular location is the cytoplasm. Its function is as follows. May function in recognizing stalled ribosomes, interact with stem-loop structures in stalled mRNA molecules, and effect endonucleolytic cleavage of the mRNA. May play a role in the release non-functional ribosomes and degradation of damaged mRNAs. Has endoribonuclease activity. This is Protein pelota homolog from Thermococcus onnurineus (strain NA1).